The primary structure comprises 254 residues: Small ribosomal subunit protein uS2 (254 aa).

The interval 225–254 (ALSERKREKDDAKLKEDEESKKASDKAEIQ) is disordered. Residues 226–254 (LSERKREKDDAKLKEDEESKKASDKAEIQ) are compositionally biased toward basic and acidic residues.

It belongs to the universal ribosomal protein uS2 family.

The polypeptide is Small ribosomal subunit protein uS2 (Cytophaga hutchinsonii (strain ATCC 33406 / DSM 1761 / CIP 103989 / NBRC 15051 / NCIMB 9469 / D465)).